A 484-amino-acid chain; its full sequence is Transcription factor MYB88 (484 aa).

The tract at residues 1-20 is disordered; it reads MEETTKQNNMKKKKKILLHS. The short motif at 13 to 20 is the Nuclear localization signal element; it reads KKKILLHS. HTH myb-type domains follow at residues 25 to 76 and 77 to 131; these read KKER…YTYL and NSDF…KKRA. DNA-binding regions (H-T-H motif) lie at residues 53–76 and 104–127; these read WAII…YTYL and WTEI…TTLC. Disordered regions lie at residues 215–241, 321–383, and 458–484; these read NATS…DKSN, RSSN…GGEL, and GVES…LDSL. Residues 232–241 show a composition bias toward basic and acidic residues; that stretch reads KESDGEDKSN. Residues 339-348 are compositionally biased toward low complexity; it reads SPASSEYSSG. Positions 354-380 are enriched in polar residues; it reads TIMTHPSGDKTQQLMSDTQTTSHQQNG. The span at 463–476 shows a compositional bias: pro residues; that stretch reads SPYPSANPSQPPPC.

Interacts with RBR1. Expressed at low levels in all organs including roots, leaves, hypocotyls stems, flowers, siliques and buds.

Its subcellular location is the nucleus. Transcription factor that binds to DNA in promoters cis-regulatory element 5'-GGCGCGC-3' of cell cycle genes, including cyclins, cyclin-dependent kinases (CDKs), and components of the pre-replication complex. Binds to DNA in promoters cis-regulatory element 5'-AGCCG-3' of auxin regulated genes (e.g. PIN3 and PIN7). Together with FAMA and MYB124, ensures that stomata contain just two guard cells (GCs) by enforcing a single symmetric precursor cell division before stomatal maturity. Represses the expression of the mitosis-inducing factors CDKB1-1 and CDKA-1, specifically required for the last guard mother cells (GMC) symmetric divisions in the stomatal pathway. Represses CYCA2-3 in newly formed guard cells. Together with MYB88, regulates stomata spacing by restricting divisions late in the stomatal cell lineage thus limiting the number of GMC divisions. In collaboration with CDKB1-1 and CDKB1-2, restrict the G1/S transition and chloroplast and nuclear number during stomatal formation, and normally maintain fate and developmental progression throughout the stomatal cell lineage. Involved in sensing and/or transducing abiotic stress (e.g. drought and salt), probably via the positive regulation of NAC019. Regulates female reproduction being required for entry into megasporogenesis, probably via the regulation of cell cycle genes. Plays a minor role in lateral roots (LRs) initiation. Involved complementarily in establishing the gravitropic set-point angles of lateral roots by regulating the transcription of PIN3 and PIN7 in gravity-sensing cells of primary and lateral roots. This chain is Transcription factor MYB88, found in Arabidopsis thaliana (Mouse-ear cress).